Here is a 198-residue protein sequence, read N- to C-terminus: Peptidyl-tRNA hydrolase (198 aa).

TRNA is bound at residue Tyr18. The active-site Proton acceptor is His23. 3 residues coordinate tRNA: Tyr69, Asn71, and Asn117.

The protein belongs to the PTH family. Monomer.

It localises to the cytoplasm. The catalysed reaction is an N-acyl-L-alpha-aminoacyl-tRNA + H2O = an N-acyl-L-amino acid + a tRNA + H(+). Functionally, hydrolyzes ribosome-free peptidyl-tRNAs (with 1 or more amino acids incorporated), which drop off the ribosome during protein synthesis, or as a result of ribosome stalling. Catalyzes the release of premature peptidyl moieties from peptidyl-tRNA molecules trapped in stalled 50S ribosomal subunits, and thus maintains levels of free tRNAs and 50S ribosomes. This chain is Peptidyl-tRNA hydrolase, found in Aeromonas hydrophila subsp. hydrophila (strain ATCC 7966 / DSM 30187 / BCRC 13018 / CCUG 14551 / JCM 1027 / KCTC 2358 / NCIMB 9240 / NCTC 8049).